Here is a 723-residue protein sequence, read N- to C-terminus: Translation initiation factor IF-2 (723 aa).

The interval Lys112–Lys138 is disordered. A compositionally biased stretch (basic residues) spans Phe114–Lys123. Residues Glu224–Lys393 form the tr-type G domain. Positions Gly233 to Thr240 are G1. Gly233–Thr240 lines the GTP pocket. Residues Gly258–His262 form a G2 region. The G3 stretch occupies residues Asp279 to Gly282. Residues Asp279–His283 and Asn333–Asp336 each bind GTP. The interval Asn333 to Asp336 is G4. The interval Ser369–Leu371 is G5.

Belongs to the TRAFAC class translation factor GTPase superfamily. Classic translation factor GTPase family. IF-2 subfamily.

It is found in the cytoplasm. One of the essential components for the initiation of protein synthesis. Protects formylmethionyl-tRNA from spontaneous hydrolysis and promotes its binding to the 30S ribosomal subunits. Also involved in the hydrolysis of GTP during the formation of the 70S ribosomal complex. This chain is Translation initiation factor IF-2, found in Anoxybacillus flavithermus (strain DSM 21510 / WK1).